The following is a 233-amino-acid chain: DnaA regulatory inactivator Hda (233 aa).

It belongs to the DnaA family. HdA subfamily. In terms of assembly, the active form seems to be an ADP-bound monomer. Forms the RIDA complex (regulatory inactivation of DnaA) of ATP-DnaA, ADP-Hda and the DNA-loaded beta sliding clamp (dnaN).

Mediates the interaction of DNA replication initiator protein DnaA with DNA polymerase subunit beta sliding clamp (dnaN). Stimulates hydrolysis of ATP-DnaA to ADP-DnaA, rendering DnaA inactive for reinitiation, a process called regulatory inhibition of DnaA or RIDA. The sequence is that of DnaA regulatory inactivator Hda from Photorhabdus laumondii subsp. laumondii (strain DSM 15139 / CIP 105565 / TT01) (Photorhabdus luminescens subsp. laumondii).